The following is a 90-amino-acid chain: Acylphosphatase (90 aa).

Residues 3–90 form the Acylphosphatase-like domain; that stretch reads AVTLKATGRV…QNYHDFRITN (88 aa). Catalysis depends on residues R18 and N36.

The protein belongs to the acylphosphatase family.

The enzyme catalyses an acyl phosphate + H2O = a carboxylate + phosphate + H(+). In Lactiplantibacillus plantarum (strain ATCC BAA-793 / NCIMB 8826 / WCFS1) (Lactobacillus plantarum), this protein is Acylphosphatase (acyP).